Consider the following 339-residue polypeptide: Phenylalanine--tRNA ligase alpha subunit (339 aa).

E250 lines the Mg(2+) pocket.

It belongs to the class-II aminoacyl-tRNA synthetase family. Phe-tRNA synthetase alpha subunit type 1 subfamily. Tetramer of two alpha and two beta subunits. It depends on Mg(2+) as a cofactor.

The protein resides in the cytoplasm. It catalyses the reaction tRNA(Phe) + L-phenylalanine + ATP = L-phenylalanyl-tRNA(Phe) + AMP + diphosphate + H(+). This chain is Phenylalanine--tRNA ligase alpha subunit, found in Christiangramia forsetii (strain DSM 17595 / CGMCC 1.15422 / KT0803) (Gramella forsetii).